Consider the following 1117-residue polypeptide: Protein ECM21 (1117 aa).

Disordered regions lie at residues 1–48 (MPFI…RRSS) and 63–155 (VHSP…YSQI). Residues 11-34 (KNSSHSLSETDLNQSKGQPFQPSP) show a composition bias toward polar residues. Ser-18 is modified (phosphoserine). The segment covering 70-81 (NNTTKGGNNNGN) has biased composition (low complexity). Phosphoserine is present on Ser-115. The span at 117-130 (SDSATTTPRSSTSD) shows a compositional bias: low complexity. A Phosphoserine modification is found at Ser-140. Lys-191 is covalently cross-linked (Glycyl lysine isopeptide (Lys-Gly) (interchain with G-Cter in ubiquitin)). Disordered regions lie at residues 275 to 312 (ATTA…ELNT) and 486 to 523 (YRQD…AQAH). The residue at position 286 (Ser-286) is a Phosphoserine. Low complexity predominate over residues 501-519 (SSSSLSSTTSSLKLTETES). Residues Ser-527 and Ser-550 each carry the phosphoserine modification. Residues Lys-577, Lys-651, and Lys-712 each participate in a glycyl lysine isopeptide (Lys-Gly) (interchain with G-Cter in ubiquitin) cross-link. Ser-775 carries the phosphoserine modification. Residues Lys-794, Lys-807, and Lys-1024 each participate in a glycyl lysine isopeptide (Lys-Gly) (interchain with G-Cter in ubiquitin) cross-link. Disordered regions lie at residues 1016–1065 (RSRF…KDKQ) and 1079–1117 (KDDE…SDEE). The segment covering 1027-1059 (STPSPVNRSHNSSPTNGLSQANGTVRIPNATTE) has biased composition (polar residues). Phosphoserine is present on Ser-1035. Residues 1089–1098 (SSSSADSLLS) are compositionally biased toward low complexity.

The protein belongs to the CSR2 family.

Its subcellular location is the cytoplasm. Its function is as follows. May be involved in cell wall organization and biogenesis. This chain is Protein ECM21 (ECM21), found in Saccharomyces cerevisiae (strain ATCC 204508 / S288c) (Baker's yeast).